The sequence spans 92 residues: Defensin-like protein 294 (92 aa).

A signal peptide spans 1 to 26 (MASRATSLFIFFFLISCTFMLLETNA). 3 cysteine pairs are disulfide-bonded: Cys63–Cys82, Cys69–Cys87, and Cys75–Cys89.

It belongs to the DEFL family.

The protein resides in the secreted. The polypeptide is Defensin-like protein 294 (Arabidopsis thaliana (Mouse-ear cress)).